A 1333-amino-acid polypeptide reads, in one-letter code: Inner capsid protein VP1 (1333 aa).

Positions 1-10 (MHSTTNNSNK) are enriched in polar residues. The tract at residues 1 to 93 (MHSTTNNSNK…MDMEKAAETT (93 aa)) is disordered. Basic and acidic residues predominate over residues 11 to 20 (RNNEEKHKQP). A compositionally biased stretch (polar residues) spans 64 to 82 (DGASRSGTNAKVATASSAR).

It belongs to the turreted BTV-fold inner capsid family. Homodecamer; each decamer is made up of two conformers of VP2, called VP2A and VP2B. 12 homodecamers assemble to form an icosahedral capsid.

The protein localises to the virion. Its function is as follows. Inner capsid protein that self-assembles to form an icosahedral capsid with a T=2 symmetry, which consists of 120 copies of VP2, with channels at each of its five-fold vertices. This capsid constitutes the innermost concentric layer of the viral mature particle. In Lymantria dispar cypovirus 1 (isolate Rao) (LdCPV-1), this protein is Inner capsid protein VP1 (S1).